The following is a 167-amino-acid chain: NADH-quinone oxidoreductase subunit B 1 (167 aa).

[4Fe-4S] cluster contacts are provided by Cys38, Cys39, Cys104, and Cys133.

This sequence belongs to the complex I 20 kDa subunit family. NDH-1 is composed of 14 different subunits. Subunits NuoB, C, D, E, F, and G constitute the peripheral sector of the complex. [4Fe-4S] cluster is required as a cofactor.

The protein localises to the cell membrane. It carries out the reaction a quinone + NADH + 5 H(+)(in) = a quinol + NAD(+) + 4 H(+)(out). In terms of biological role, NDH-1 shuttles electrons from NADH, via FMN and iron-sulfur (Fe-S) centers, to quinones in the respiratory chain. The immediate electron acceptor for the enzyme in this species is believed to be ubiquinone. Couples the redox reaction to proton translocation (for every two electrons transferred, four hydrogen ions are translocated across the cytoplasmic membrane), and thus conserves the redox energy in a proton gradient. This Roseiflexus castenholzii (strain DSM 13941 / HLO8) protein is NADH-quinone oxidoreductase subunit B 1.